A 487-amino-acid polypeptide reads, in one-letter code: Glutamyl-tRNA(Gln) amidotransferase subunit A (487 aa).

Residues lysine 74 and serine 149 each act as charge relay system in the active site. Serine 173 acts as the Acyl-ester intermediate in catalysis.

Belongs to the amidase family. GatA subfamily. Heterotrimer of A, B and C subunits.

It carries out the reaction L-glutamyl-tRNA(Gln) + L-glutamine + ATP + H2O = L-glutaminyl-tRNA(Gln) + L-glutamate + ADP + phosphate + H(+). Its function is as follows. Allows the formation of correctly charged Gln-tRNA(Gln) through the transamidation of misacylated Glu-tRNA(Gln) in organisms which lack glutaminyl-tRNA synthetase. The reaction takes place in the presence of glutamine and ATP through an activated gamma-phospho-Glu-tRNA(Gln). This chain is Glutamyl-tRNA(Gln) amidotransferase subunit A, found in Synechococcus sp. (strain CC9311).